The chain runs to 478 residues: Lipoprotein lipase (478 aa).

The first 27 residues, 1–27, serve as a signal peptide directing secretion; the sequence is MESKVLLLLALSVWLQSLTVSRGGLVA. Residues 35–56 form an interaction with GPIHBP1 region; that stretch reads KDFRDIESKFALRTPEDTAEDT. Cys57 and Cys70 are disulfide-bonded. The N-linked (GlcNAc...) asparagine glycan is linked to Asn73. Position 124 is a 3'-nitrotyrosine (Tyr124). Ser162 functions as the Nucleophile in the catalytic mechanism. Residue Asp186 is the Charge relay system of the active site. At Tyr194 the chain carries 3'-nitrotyrosine. Residues Ala197, Arg200, Ser202, and Asp205 each coordinate Ca(2+). Cys246 and Cys269 are disulfide-bonded. Residues 246-269 form an essential for determining substrate specificity region; that stretch reads CNIGEALRVIAERGLGDVDQLVKC. His271 acts as the Charge relay system in catalysis. Disulfide bonds link Cys294–Cys313 and Cys305–Cys308. The PLAT domain occupies 344 to 467; that stretch reads FHYQVKIHFS…KGKSPVIFVK (124 aa). Position 346 is a 3'-nitrotyrosine (Tyr346). Asn389 carries an N-linked (GlcNAc...) asparagine glycan. The important for interaction with lipoprotein particles stretch occupies residues 420–424; sequence WSNWW. The interval 433–437 is important for heparin binding; sequence KIRVK. The tract at residues 446–470 is interaction with GPIHBP1; that stretch reads IFCSREKMSYLQKGKSPVIFVKCHD. Cys448 and Cys468 form a disulfide bridge.

It belongs to the AB hydrolase superfamily. Lipase family. As to quaternary structure, homodimer. Interacts with GPIHBP1 with 1:1 stoichiometry. Interacts with APOC2; the interaction activates LPL activity in the presence of lipids. Interaction with heparan sulfate proteoglycans is required to protect LPL against loss of activity. Associates with lipoprotein particles in blood plasma. Interacts with LMF1 and SEL1L; interaction with SEL1L is required to prevent aggregation of newly synthesized LPL in the endoplasmic reticulum (ER), and for normal export of LPL from the ER to the extracellular space. Interacts with SORL1; SORL1 acts as a sorting receptor, promoting LPL localization to endosomes and later to lysosomes, leading to degradation of newly synthesized LPL. Tyrosine nitration after lipopolysaccharide (LPS) challenge down-regulates the lipase activity.

It localises to the cell membrane. The protein resides in the secreted. It is found in the extracellular space. Its subcellular location is the extracellular matrix. It catalyses the reaction a triacylglycerol + H2O = a diacylglycerol + a fatty acid + H(+). The catalysed reaction is a 1,2-diacyl-sn-glycero-3-phosphocholine + H2O = a 2-acyl-sn-glycero-3-phosphocholine + a fatty acid + H(+). It carries out the reaction 1,2,3-tri-(9Z-octadecenoyl)-glycerol + H2O = di-(9Z)-octadecenoylglycerol + (9Z)-octadecenoate + H(+). The enzyme catalyses 1,2-di-(9Z-octadecenoyl)-sn-glycero-3-phosphocholine + H2O = (9Z-octadecenoyl)-sn-glycero-3-phosphocholine + (9Z)-octadecenoate + H(+). It catalyses the reaction 1,2,3-tributanoylglycerol + H2O = dibutanoylglycerol + butanoate + H(+). The catalysed reaction is 1,2-dihexadecanoyl-sn-glycero-3-phosphocholine + H2O = hexadecanoyl-sn-glycero-3-phosphocholine + hexadecanoate + H(+). The apolipoprotein APOC2 acts as a coactivator of LPL activity. Ca(2+) binding promotes protein stability and formation of the active homodimer. Interaction with GPIHBP1 protects LPL against inactivation by ANGPTL4. In terms of biological role, key enzyme in triglyceride metabolism. Catalyzes the hydrolysis of triglycerides from circulating chylomicrons and very low density lipoproteins (VLDL), and thereby plays an important role in lipid clearance from the blood stream, lipid utilization and storage. Although it has both phospholipase and triglyceride lipase activities it is primarily a triglyceride lipase with low but detectable phospholipase activity. Mediates margination of triglyceride-rich lipoprotein particles in capillaries. Recruited to its site of action on the luminal surface of vascular endothelium by binding to GPIHBP1 and cell surface heparan sulfate proteoglycans. In Ovis aries (Sheep), this protein is Lipoprotein lipase (LPL).